A 155-amino-acid polypeptide reads, in one-letter code: Large ribosomal subunit protein eL24 (155 aa).

The interval 92–155 is disordered; sequence AKRNMKPEVR…KAAPRVGGKR (64 aa). The span at 96 to 117 shows a compositional bias: basic and acidic residues; sequence MKPEVRKAQREQAIKQAKEQKK. The segment covering 124-133 has biased composition (low complexity); that stretch reads KTTAPPTKGK.

The protein belongs to the eukaryotic ribosomal protein eL24 family.

This chain is Large ribosomal subunit protein eL24 (RpL24), found in Plutella xylostella (Diamondback moth).